We begin with the raw amino-acid sequence, 572 residues long: NADP-dependent malic enzyme (572 aa).

Met1 is modified (N-acetylmethionine). Catalysis depends on Tyr102, which acts as the Proton donor. Residue Arg155 coordinates NADP(+). The active-site Proton acceptor is Lys173. Positions 245, 246, and 269 each coordinate a divalent metal cation. Residues Asp269 and 301–318 (GAGE…MAME) contribute to the NADP(+) site. Ser336 is modified (phosphoserine).

This sequence belongs to the malic enzymes family. As to quaternary structure, homotetramer. Requires Mg(2+) as cofactor. It depends on Mn(2+) as a cofactor.

The protein localises to the cytoplasm. The catalysed reaction is (S)-malate + NADP(+) = pyruvate + CO2 + NADPH. It catalyses the reaction oxaloacetate + H(+) = pyruvate + CO2. Functionally, catalyzes the oxidative decarboxylation of (S)-malate in the presence of NADP(+) and divalent metal ions, and decarboxylation of oxaloacetate. This chain is NADP-dependent malic enzyme (Me1), found in Mus musculus (Mouse).